We begin with the raw amino-acid sequence, 374 residues long: Chaperone protein DnaJ (374 aa).

The 66-residue stretch at 5-70 (DYYEVLGVAR…NKRRMYDSHG (66 aa)) folds into the J domain. The CR-type zinc finger occupies 130–207 (GVERRIEIPT…CHGNGRVEED (78 aa)). 8 residues coordinate Zn(2+): Cys143, Cys146, Cys159, Cys162, Cys181, Cys184, Cys195, and Cys198. 4 CXXCXGXG motif repeats span residues 143–150 (CGDCDGSG), 159–166 (CNVCHGRG), 181–188 (CHNCGGRG), and 195–202 (CKTCHGNG).

Belongs to the DnaJ family. Homodimer. The cofactor is Zn(2+).

It is found in the cytoplasm. In terms of biological role, participates actively in the response to hyperosmotic and heat shock by preventing the aggregation of stress-denatured proteins and by disaggregating proteins, also in an autonomous, DnaK-independent fashion. Unfolded proteins bind initially to DnaJ; upon interaction with the DnaJ-bound protein, DnaK hydrolyzes its bound ATP, resulting in the formation of a stable complex. GrpE releases ADP from DnaK; ATP binding to DnaK triggers the release of the substrate protein, thus completing the reaction cycle. Several rounds of ATP-dependent interactions between DnaJ, DnaK and GrpE are required for fully efficient folding. Also involved, together with DnaK and GrpE, in the DNA replication of plasmids through activation of initiation proteins. The chain is Chaperone protein DnaJ from Stenotrophomonas maltophilia (strain K279a).